A 334-amino-acid polypeptide reads, in one-letter code: Dual specificity mitogen-activated protein kinase kinase 6 (334 aa).

Over residues 1-11 (MSQSKGKKRNP) the composition is skewed to basic residues. The interval 1-34 (MSQSKGKKRNPGLKIPKEAFEQPQTSSTPPRDLD) is disordered. Residues 4–19 (SKGKKRNPGLKIPKEA) are d domain. One can recognise a Protein kinase domain in the interval 53–314 (LEPIVELGRG…YPELMQHPFF (262 aa)). ATP contacts are provided by residues 59–67 (LGRGAYGVV) and Lys-82. The active-site Proton acceptor is Asp-179. Ser-207 carries the post-translational modification Phosphoserine; by MAPK3. Thr-211 bears the Phosphothreonine; by MAPK3 mark. The interval 311-334 (HPFFTVHESKAADVASFVKLILGD) is DVD domain.

This sequence belongs to the protein kinase superfamily. STE Ser/Thr protein kinase family. MAP kinase kinase subfamily. In terms of assembly, dimer. Interacts (via its D domain) with its substrates MAPK11, MAPK12, MAPK13 and MAPK14. Interacts (via its DVD domain) with MAP3Ks activators like MAP3K5/ASK1, MAP3K1/MEKK1, MAP3K2/MEKK2, MAP3K3/MEKK3, MAP3K4/MEKK4, MAP3K7/TAK1, MAP3K11/MLK3 and MAP3K17/TAOK2. Interacts with DCTN1. Interacts with EIF2AK2/PKR. Post-translationally, weakly autophosphorylated. Phosphorylated at Ser-207 and Thr-211 by the majority of M3Ks, such as MAP3K5/ASK1, MAP3K1/MEKK1, MAP3K2/MEKK2, MAP3K3/MEKK3, MAP3K4/MEKK4, MAP3K7/TAK1, MAP3K11/MLK3 and MAP3K17/TAOK2. In response to genotoxic stress, MAP3K-phosphorylated MAP2K6 is ubiquitinated and degraded by the SCF(FBXO31) complex.

It is found in the nucleus. Its subcellular location is the cytoplasm. The protein resides in the cytoskeleton. It catalyses the reaction L-seryl-[protein] + ATP = O-phospho-L-seryl-[protein] + ADP + H(+). The catalysed reaction is L-threonyl-[protein] + ATP = O-phospho-L-threonyl-[protein] + ADP + H(+). The enzyme catalyses L-tyrosyl-[protein] + ATP = O-phospho-L-tyrosyl-[protein] + ADP + H(+). With respect to regulation, activated by dual phosphorylation on Ser-207 and Thr-211 in response to a variety of cellular stresses, including UV radiation, osmotic shock, hypoxia, inflammatory cytokines, interferon gamma (IFNG), and less often by growth factors. MAP2K6/MKK6 is activated by the majority of M3Ks, such as MAP3K5/ASK1, MAP3K1/MEKK1, MAP3K2/MEKK2, MAP3K3/MEKK3, MAP3K4/MEKK4, MAP3K7/TAK1, MAP3K11/MLK3 and MAP3K17/TAOK2. In terms of biological role, dual specificity protein kinase which acts as an essential component of the MAP kinase signal transduction pathway. With MAP3K3/MKK3, catalyzes the concomitant phosphorylation of a threonine and a tyrosine residue in the MAP kinases p38 MAPK11, MAPK12, MAPK13 and MAPK14 and plays an important role in the regulation of cellular responses to cytokines and all kinds of stresses. Especially, MAP2K3/MKK3 and MAP2K6/MKK6 are both essential for the activation of MAPK11 and MAPK13 induced by environmental stress, whereas MAP2K6/MKK6 is the major MAPK11 activator in response to TNF. MAP2K6/MKK6 also phosphorylates and activates PAK6. The p38 MAP kinase signal transduction pathway leads to direct activation of transcription factors. Nuclear targets of p38 MAP kinase include the transcription factors ATF2 and ELK1. Within the p38 MAPK signal transduction pathway, MAP3K6/MKK6 mediates phosphorylation of STAT4 through MAPK14 activation, and is therefore required for STAT4 activation and STAT4-regulated gene expression in response to IL-12 stimulation. The pathway is also crucial for IL-6-induced SOCS3 expression and down-regulation of IL-6-mediated gene induction; and for IFNG-dependent gene transcription. Has a role in osteoclast differentiation through NF-kappa-B transactivation by TNFSF11, and in endochondral ossification and since SOX9 is another likely downstream target of the p38 MAPK pathway. MAP2K6/MKK6 mediates apoptotic cell death in thymocytes. Acts also as a regulator for melanocytes dendricity, through the modulation of Rho family GTPases. The polypeptide is Dual specificity mitogen-activated protein kinase kinase 6 (Map2k6) (Mus musculus (Mouse)).